A 403-amino-acid chain; its full sequence is Odorant receptor 43b (403 aa).

The Cytoplasmic portion of the chain corresponds to 1–49; that stretch reads MFGHFKLVYPAPISEPIQSRDSNAYMMETLRNSGLNLKNDFGIGRKIWR. The chain crosses the membrane as a helical span at residues 50-70; that stretch reads VFSFTYNMVILPVSFPINYVI. The Extracellular segment spans residues 71–83; sequence HLAEFPPELLLQS. Residues 84-104 form a helical membrane-spanning segment; the sequence is LQLCLNTWCFALKFFTLIVYT. At 105–139 the chain is on the cytoplasmic side; the sequence is HRLELANKHFDELDKYCVKPAEKRKVRDMVATITR. The chain crosses the membrane as a helical span at residues 140–160; it reads LYLTFVVVYVLYATSTLLDGL. Topologically, residues 161 to 193 are extracellular; sequence LHHRVPYNTYYPFINWRVDRTQMYIQSFLEYFT. The chain crosses the membrane as a helical span at residues 194–214; the sequence is VGYAIYVATATDSYPVIYVAA. The Cytoplasmic portion of the chain corresponds to 215–271; it reads LRTHILLLKDRIIYLGDPSNEGSSDPSYMFKSLVDCIKAHRTMLNFCDAIQPIISGT. The chain crosses the membrane as a helical span at residues 272-292; the sequence is IFAQFIICGSILGIIMINMVL. Residues 293–299 are Extracellular-facing; sequence FADQSTR. A helical membrane pass occupies residues 300–320; it reads FGIVIYVMAVLLQTFPLCFYC. Residues 321-372 are Cytoplasmic-facing; sequence NAIVDDCKELAHALFHSAWWVQDKRYQRTVIQFLQKLQQPMTFTAMNIFNIN. Residues 373–393 traverse the membrane as a helical segment; the sequence is LATNINVAKFAFTVYAIASGM. The Extracellular segment spans residues 394-403; the sequence is NLDQKLSIKE.

This sequence belongs to the insect chemoreceptor superfamily. Heteromeric odorant receptor channel (TC 1.A.69) family. Or2a subfamily. As to quaternary structure, interacts with Orco. Complexes exist early in the endomembrane system in olfactory sensory neurons (OSNs), coupling these complexes to the conserved ciliary trafficking pathway. As to expression, expressed in 16 olfactory receptor neurons in a broad area across the antenna, including both anterior and posterior faces and in the maxillary palp. This expression pattern matches the distribution of the small sensilla basiconica. Expression in the antenna is observed late in antennal development at 93 hours APF.

It is found in the cell membrane. Its function is as follows. Odorant receptor which mediates acceptance or avoidance behavior, depending on its substrates. The odorant receptor repertoire encodes a large collection of odor stimuli that vary widely in identity, intensity, and duration. May form a complex with Orco to form odorant-sensing units, providing sensitive and prolonged odorant signaling and calcium permeability. The chain is Odorant receptor 43b (Or43b) from Drosophila melanogaster (Fruit fly).